Reading from the N-terminus, the 220-residue chain is MGQKINPYGLRLGITTDHVSHWYSDSTRPGQRYADYVSEDIKIRSYLTKTLDRAGIARIEIERTRDRIRVDIYTARPGIVIGRRGAEADRYRLELEKITSKQVQLNILEVKNPETTARLVAQGIAEQLAARVAFRRAMRKGLQSATSAGVRGIRIRLAGRLGGAEISRSEFYIEGQVPLQTLRASIDYGFYEARTPYGHIGVKVWIYKKPSVRGRTEGGG.

The 69-residue stretch at 43 to 111 (IRSYLTKTLD…QVQLNILEVK (69 aa)) folds into the KH type-2 domain.

This sequence belongs to the universal ribosomal protein uS3 family. As to quaternary structure, part of the 30S ribosomal subunit. Forms a tight complex with proteins S10 and S14.

Functionally, binds the lower part of the 30S subunit head. Binds mRNA in the 70S ribosome, positioning it for translation. This Tropheryma whipplei (strain TW08/27) (Whipple's bacillus) protein is Small ribosomal subunit protein uS3.